We begin with the raw amino-acid sequence, 119 residues long: Large ribosomal subunit protein bL20c (119 aa).

It belongs to the bacterial ribosomal protein bL20 family.

It localises to the plastid. The protein resides in the chloroplast. Binds directly to 23S ribosomal RNA and is necessary for the in vitro assembly process of the 50S ribosomal subunit. It is not involved in the protein synthesizing functions of that subunit. In Pinus thunbergii (Japanese black pine), this protein is Large ribosomal subunit protein bL20c (rpl20).